The sequence spans 363 residues: Wortmanamides biosynthesis cluster protein C (363 aa).

7 helical membrane passes run 15–35 (FVTL…RFVA), 48–68 (WLAV…LMAI), 95–115 (IAGL…ILAF), 129–149 (ICIY…CIFQ), 175–195 (ILGG…LAMI), 210–230 (VTVL…KIAV), and 237–257 (LYAF…ALLC). A disordered region spans residues 293 to 312 (SSSKNSRKHGPYDSDQSPGP). A glycan (N-linked (GlcNAc...) asparagine) is linked at N321. The interval 344 to 363 (SPITHPQAYSKQTTRQFDVV) is disordered.

The protein belongs to the SAT4 family.

The protein resides in the membrane. It functions in the pathway secondary metabolite biosynthesis. In terms of biological role, part of the gene cluster that mediates the biosynthesis of wortmanamides A and B, reduced long-chain polyketides amidated with a specific omega-amino acid, 5-aminopentanoic acid (5PA). The PKS modules of TwmB are involved in the synthesis of the polyketide backbone, whereas the non-canonical C domain of TwmB is a bonafide condensation domain that specifically selects 5PA and catalyzes amidation to release polyketide chain. The C domain clearly prefers C16 and C18 fatty acyl substrates, which is consistent with simultaneous formation of both octaketide and nonaketide acyl amides wortmanamides A and B. Because TwmB lacks a designated enoylreductase (ER) domain, the required activity is provided the enoyl reductase TwmE. The roles of the remaining enzymes have still to be clarified. The polypeptide is Wortmanamides biosynthesis cluster protein C (Talaromyces wortmannii (Penicillium wortmannii)).